Here is a 252-residue protein sequence, read N- to C-terminus: Nuclease C1 (252 aa).

The active-site Proton acceptor is His87. A Mg(2+)-binding site is contributed by Asn119.

It belongs to the DNA/RNA non-specific endonuclease family. Mg(2+) serves as cofactor. It depends on Mn(2+) as a cofactor.

The protein resides in the secreted. In terms of biological role, this enzyme has both RNase and DNase activity. The polypeptide is Nuclease C1 (NUC1CE) (Cunninghamella echinulata var. echinulata).